The primary structure comprises 76 residues: Omega-conotoxin-like TxMKLT1-0141 (76 aa).

The signal sequence occupies residues 1–22 (MKLTCMMIVAVLFLTAWTFATA). A propeptide spanning residues 23–50 (DDSSNGLENLFPKAHHEMKNPEASKLNE) is cleaved from the precursor. 3 disulfides stabilise this stretch: Cys52-Cys67, Cys59-Cys70, and Cys66-Cys75.

Belongs to the conotoxin O1 superfamily. As to expression, expressed by the venom duct.

It is found in the secreted. Its function is as follows. Omega-conotoxins act at presynaptic membranes, they bind and block voltage-gated calcium channels (Cav). The chain is Omega-conotoxin-like TxMKLT1-0141 from Conus textile (Cloth-of-gold cone).